A 331-amino-acid chain; its full sequence is HTH-type transcriptional regulator RipA (331 aa).

Residues 112 to 209 form the HTH araC/xylS-type domain; sequence RAVAQVLVSN…GATPSTFTTG (98 aa). 2 consecutive DNA-binding regions (H-T-H motif) follow at residues 129–150 and 176–199; these read EEFA…LKST and ISVV…RRHT.

Functionally, under iron limitation, RipA negatively controls the expression of the acn (aconitase), catA (catechol 1,2 dioxygenase), leuCD (isopropylmalate dehydratase), narKGHJI (nitrite/nitrate transporter and nitrate reductase), sdhCAB (succinate dehydrogenase), pta (phosphotransacetylase) and katA (catalase) genes. Binds to the consensus sequence in the promoter region. The protein is HTH-type transcriptional regulator RipA of Corynebacterium glutamicum (strain ATCC 13032 / DSM 20300 / JCM 1318 / BCRC 11384 / CCUG 27702 / LMG 3730 / NBRC 12168 / NCIMB 10025 / NRRL B-2784 / 534).